Reading from the N-terminus, the 85-residue chain is Actobindin homolog (85 aa).

Residues 35-52 (DRNELLSGIKEGKELKKA) enclose the WH2 domain.

Is able to bind two actin monomers at high concentrations of G-actin. The chain is Actobindin homolog from Entamoeba histolytica.